A 302-amino-acid chain; its full sequence is Aspartate carbamoyltransferase catalytic subunit (302 aa).

Carbamoyl phosphate is bound by residues R53 and T54. K82 is a binding site for L-aspartate. Carbamoyl phosphate-binding residues include R103, H131, and Q134. Positions 164 and 223 each coordinate L-aspartate. Residues L260 and P261 each contribute to the carbamoyl phosphate site.

The protein belongs to the aspartate/ornithine carbamoyltransferase superfamily. ATCase family. As to quaternary structure, heterooligomer of catalytic and regulatory chains.

It catalyses the reaction carbamoyl phosphate + L-aspartate = N-carbamoyl-L-aspartate + phosphate + H(+). Its pathway is pyrimidine metabolism; UMP biosynthesis via de novo pathway; (S)-dihydroorotate from bicarbonate: step 2/3. Its function is as follows. Catalyzes the condensation of carbamoyl phosphate and aspartate to form carbamoyl aspartate and inorganic phosphate, the committed step in the de novo pyrimidine nucleotide biosynthesis pathway. The polypeptide is Aspartate carbamoyltransferase catalytic subunit (Methanococcus maripaludis (strain C7 / ATCC BAA-1331)).